The chain runs to 402 residues: Succinyl-diaminopimelate desuccinylase (402 aa).

Histidine 88 is a binding site for Zn(2+). Aspartate 90 is an active-site residue. Aspartate 121 lines the Zn(2+) pocket. Glutamate 155 (proton acceptor) is an active-site residue. Residues glutamate 156, glutamate 184, and histidine 374 each contribute to the Zn(2+) site.

This sequence belongs to the peptidase M20A family. DapE subfamily. As to quaternary structure, homodimer. The cofactor is Zn(2+). Requires Co(2+) as cofactor.

The enzyme catalyses N-succinyl-(2S,6S)-2,6-diaminopimelate + H2O = (2S,6S)-2,6-diaminopimelate + succinate. It participates in amino-acid biosynthesis; L-lysine biosynthesis via DAP pathway; LL-2,6-diaminopimelate from (S)-tetrahydrodipicolinate (succinylase route): step 3/3. Catalyzes the hydrolysis of N-succinyl-L,L-diaminopimelic acid (SDAP), forming succinate and LL-2,6-diaminopimelate (DAP), an intermediate involved in the bacterial biosynthesis of lysine and meso-diaminopimelic acid, an essential component of bacterial cell walls. In Psychrobacter sp. (strain PRwf-1), this protein is Succinyl-diaminopimelate desuccinylase.